Here is a 33-residue protein sequence, read N- to C-terminus: Cytochrome b6-f complex subunit 8 (33 aa).

A helical transmembrane segment spans residues 2–22; it reads LFTVAWASLAAMFSFSIAMVV.

It belongs to the PetN family. In terms of assembly, the 4 large subunits of the cytochrome b6-f complex are cytochrome b6, subunit IV (17 kDa polypeptide, PetD), cytochrome f and the Rieske protein, while the 4 small subunits are PetG, PetL, PetM and PetN. The complex functions as a dimer.

Its subcellular location is the cellular thylakoid membrane. Its function is as follows. Component of the cytochrome b6-f complex, which mediates electron transfer between photosystem II (PSII) and photosystem I (PSI), cyclic electron flow around PSI, and state transitions. The polypeptide is Cytochrome b6-f complex subunit 8 (Synechococcus sp. (strain CC9902)).